Reading from the N-terminus, the 664-residue chain is Probable LRR receptor-like serine/threonine-protein kinase At1g63430 (664 aa).

Residues 1-22 (MRSKYFCSLALVLGLFFVSCDG) form the signal peptide. Residues 23-288 (FASNEVQALR…KHHRASKPKW (266 aa)) lie on the Extracellular side of the membrane. N-linked (GlcNAc...) asparagine glycosylation is present at Asn75. LRR repeat units follow at residues 94–116 (YLQE…IGNL), 118–140 (NLKI…IGSL), 142–165 (GIMI…GNLK), and 166–178 (YLRE…NRLQ). A glycan (N-linked (GlcNAc...) asparagine) is linked at Asn197. A helical membrane pass occupies residues 289–309 (LLALEIVTGSMVGLLLLVALF). At 310–664 (SAVHRWNNRS…LAWAELALDS (355 aa)) the chain is on the cytoplasmic side. In terms of domain architecture, Protein kinase spans 360–642 (EDFSNIIGLS…ELCETLESRI (283 aa)).

Belongs to the protein kinase superfamily. Ser/Thr protein kinase family.

It is found in the cell membrane. The enzyme catalyses L-seryl-[protein] + ATP = O-phospho-L-seryl-[protein] + ADP + H(+). It carries out the reaction L-threonyl-[protein] + ATP = O-phospho-L-threonyl-[protein] + ADP + H(+). The sequence is that of Probable LRR receptor-like serine/threonine-protein kinase At1g63430 from Arabidopsis thaliana (Mouse-ear cress).